We begin with the raw amino-acid sequence, 110 residues long: Small ribosomal subunit protein eS25 (110 aa).

Residues 1-39 (MPPKAAGGKSKQIQASKAAAKGSSGGAGRKKWSKGRSRE) form a disordered region.

Belongs to the eukaryotic ribosomal protein eS25 family.

In Dictyostelium discoideum (Social amoeba), this protein is Small ribosomal subunit protein eS25 (rps25).